A 601-amino-acid polypeptide reads, in one-letter code: NAD-dependent malic enzyme 59 kDa isoform, mitochondrial (601 aa).

A mitochondrion-targeting transit peptide spans 1 to 18; the sequence is MWRVARSAASTFRRTRRL. Tyrosine 129 serves as the catalytic Proton donor. Arginine 182 contacts NAD(+). Catalysis depends on lysine 200, which acts as the Proton acceptor. The a divalent metal cation site is built by glutamate 271, aspartate 272, and aspartate 295. Aspartate 295 and asparagine 444 together coordinate NAD(+).

This sequence belongs to the malic enzymes family. As to quaternary structure, heterodimer of two related subunits. Mg(2+) serves as cofactor. The cofactor is Mn(2+).

It localises to the mitochondrion matrix. The enzyme catalyses (S)-malate + NAD(+) = pyruvate + CO2 + NADH. The polypeptide is NAD-dependent malic enzyme 59 kDa isoform, mitochondrial (Solanum tuberosum (Potato)).